A 73-amino-acid polypeptide reads, in one-letter code: Translation initiation factor IF-1 (73 aa).

An S1-like domain is found at 1 to 73 (MPKKEGVIEI…TRGRIVYRYK (73 aa)).

This sequence belongs to the IF-1 family. As to quaternary structure, component of the 30S ribosomal translation pre-initiation complex which assembles on the 30S ribosome in the order IF-2 and IF-3, IF-1 and N-formylmethionyl-tRNA(fMet); mRNA recruitment can occur at any time during PIC assembly.

The protein localises to the cytoplasm. Its function is as follows. One of the essential components for the initiation of protein synthesis. Stabilizes the binding of IF-2 and IF-3 on the 30S subunit to which N-formylmethionyl-tRNA(fMet) subsequently binds. Helps modulate mRNA selection, yielding the 30S pre-initiation complex (PIC). Upon addition of the 50S ribosomal subunit IF-1, IF-2 and IF-3 are released leaving the mature 70S translation initiation complex. The chain is Translation initiation factor IF-1 from Nocardioides sp. (strain ATCC BAA-499 / JS614).